A 152-amino-acid polypeptide reads, in one-letter code: Ribosome maturation factor RimP (152 aa).

This sequence belongs to the RimP family.

It localises to the cytoplasm. Functionally, required for maturation of 30S ribosomal subunits. This Burkholderia multivorans (strain ATCC 17616 / 249) protein is Ribosome maturation factor RimP.